Here is a 125-residue protein sequence, read N- to C-terminus: Protein ApaG (125 aa).

Residues 1-125 enclose the ApaG domain; it reads MADSPRVCVQ…FRLAVPTLIH (125 aa).

The polypeptide is Protein ApaG (Cronobacter sakazakii (strain ATCC BAA-894) (Enterobacter sakazakii)).